The primary structure comprises 156 residues: MPRKGPAPKRPLVNDPVYGSQLVTQLVNKVLLDGKKSLAERIVYGALEQAREKTGTDPVVTLKRAMDNVKPSLEVRSRRVGGATYQVPVEVRPDRSVTLALRWLVSFSKARREKTMIERLANEILDASNGLGAAVKRREDTHKMAEANRAFAHYRW.

Belongs to the universal ribosomal protein uS7 family. As to quaternary structure, part of the 30S ribosomal subunit. Contacts proteins S9 and S11.

Functionally, one of the primary rRNA binding proteins, it binds directly to 16S rRNA where it nucleates assembly of the head domain of the 30S subunit. Is located at the subunit interface close to the decoding center, probably blocks exit of the E-site tRNA. The protein is Small ribosomal subunit protein uS7 of Mycolicibacterium gilvum (strain PYR-GCK) (Mycobacterium gilvum (strain PYR-GCK)).